A 1373-amino-acid polypeptide reads, in one-letter code: TAL effector protein PthXo1 (1373 aa).

Disordered stretches follow at residues 1–68 and 127–152; these read MDPI…SAGS and AARP…PAAQ. Positions 131–141 are enriched in basic residues; it reads PRAKPAPRRRA. Low complexity predominate over residues 142–152; it reads AQPSDASPAAQ. A Cryptic repeat -1 repeat occupies 221-239; sequence THEDIVGVGKQWSGARALE. The Cryptic repeat 0 repeat unit spans residues 256–273; the sequence is DTGQLVKIAKRGGVTAVE. Core repeat repeat units lie at residues 289–322, 323–356, 357–390, 391–424, 425–458, 459–492, 493–525, 526–559, 560–593, 594–627, 628–661, 662–695, 696–729, 730–763, 764–797, 798–831, 832–865, 866–899, 900–933, 934–967, 968–1001, 1002–1034, and 1035–1068; these read LTPA…QAHG, LPPD…QAHG, LTPD…QAHG, LTPD…QTHG, LTQV…QAHG, LTQE…QAHG, LTPA…QDHG, LTLA…QAHG, LTQD…QDHG, LTPD…QDHG, and LTLD…QDHG. HEAT repeat units follow at residues 714 to 760, 782 to 828, 850 to 893, and 918 to 961; these read LETV…VLCQ and LETV…LLPV. The stretch at 1053–1091 is one HEAT 5 repeat; it reads LETVQRLLPVLCQDHGLTPNQVVAIASNGGKQALESIVA. One copy of the Core repeat 23.5 repeat lies at 1069 to 1087; it reads LTPNQVVAIASNGGKQALE. Positions 1136–1364 are acidic activation domain; it reads RVNRRIGERT…ELAWLMELLP (229 aa). Residues 1222–1225 carry the Nuclear localization signal NLS1 motif; it reads KRAK. The interval 1250–1286 is disordered; sequence LDAPSPMHEGDQTGASSRKRSRSDRAVTGPSAQHSFE. The Nuclear localization signal NLS2 signature appears at 1268 to 1271; it reads KRSR. Residues 1305–1308 carry the Nuclear localization signal NLS3 motif; it reads KRPR.

The protein belongs to the transcription activator-like effector (TALE) family.

It localises to the secreted. The protein resides in the host nucleus. Functionally, avirulence protein. Acts as a transcription factor in rice, inducing expression of a number of host genes including SWEET11 (Os8N3, XA13, AC Q6YZF3) in susceptible plants with the Xa13 allele. Plants with the xa13 allele, which has an altered promoter, are resistant to bacterial blight caused by this bacterial strain and do not induce SWEET11. The xa13 allele elicits an atypical hypersensitive response (HR). PthXo1 binds SWEET11 promoter DNA in a sequence-specific manner. The sequence is that of TAL effector protein PthXo1 (pthXo1) from Xanthomonas oryzae pv. oryzae (strain PXO99A).